A 426-amino-acid polypeptide reads, in one-letter code: D-tagatose-1,6-bisphosphate aldolase subunit KbaZ (426 aa).

Belongs to the GatZ/KbaZ family. KbaZ subfamily. As to quaternary structure, forms a complex with KbaY.

It participates in carbohydrate metabolism; D-tagatose 6-phosphate degradation; D-glyceraldehyde 3-phosphate and glycerone phosphate from D-tagatose 6-phosphate: step 2/2. Functionally, component of the tagatose-1,6-bisphosphate aldolase KbaYZ that is required for full activity and stability of the Y subunit. Could have a chaperone-like function for the proper and stable folding of KbaY. When expressed alone, KbaZ does not show any aldolase activity. In Escherichia coli O139:H28 (strain E24377A / ETEC), this protein is D-tagatose-1,6-bisphosphate aldolase subunit KbaZ.